The sequence spans 556 residues: 2-succinyl-5-enolpyruvyl-6-hydroxy-3-cyclohexene-1-carboxylate synthase (556 aa).

It belongs to the TPP enzyme family. MenD subfamily. Homodimer. Mg(2+) is required as a cofactor. The cofactor is Mn(2+). Thiamine diphosphate serves as cofactor.

It catalyses the reaction isochorismate + 2-oxoglutarate + H(+) = 5-enolpyruvoyl-6-hydroxy-2-succinyl-cyclohex-3-ene-1-carboxylate + CO2. It participates in quinol/quinone metabolism; 1,4-dihydroxy-2-naphthoate biosynthesis; 1,4-dihydroxy-2-naphthoate from chorismate: step 2/7. Its pathway is quinol/quinone metabolism; menaquinone biosynthesis. Catalyzes the thiamine diphosphate-dependent decarboxylation of 2-oxoglutarate and the subsequent addition of the resulting succinic semialdehyde-thiamine pyrophosphate anion to isochorismate to yield 2-succinyl-5-enolpyruvyl-6-hydroxy-3-cyclohexene-1-carboxylate (SEPHCHC). The protein is 2-succinyl-5-enolpyruvyl-6-hydroxy-3-cyclohexene-1-carboxylate synthase of Enterobacter sp. (strain 638).